Here is a 727-residue protein sequence, read N- to C-terminus: Zinc metalloproteinase nas-38 (727 aa).

The signal sequence occupies residues 1-25 (MPSPSYNRHIIIASCFCCLLIFSSA). Positions 26–114 (ARVPKASKKH…FTQGKREKRK (89 aa)) are excised as a propeptide. One can recognise a Peptidase M12A domain in the interval 113–312 (RKIGRNPLYK…QAINMAYGCT (200 aa)). 2 cysteine pairs are disulfide-bonded: Cys158/Cys311 and Cys179/Cys199. Zn(2+) is bound at residue His207. Glu208 is an active-site residue. The Zn(2+) site is built by His211 and His217. Residues 306 to 345 (NMAYGCTESCADLPCLRNGYTHPNNCSMCACPEGLSGRYC) form the EGF-like domain. N-linked (GlcNAc...) asparagine glycosylation occurs at Asn330. The 117-residue stretch at 353 to 469 (AQCGGVIFAT…AGFKAKFWSN (117 aa)) folds into the CUB domain. 2 disulfide bridges follow: Cys355/Cys383 and Cys411/Cys432. Disordered regions lie at residues 473-506 (PEGV…QSTT) and 532-561 (TPLT…TEPS). Over residues 535 to 554 (TSSSTTTESTTVSSTTQSTT) the composition is skewed to low complexity. The TSP type-1 domain occupies 610 to 658 (ECGCGAWSEWQGECSQQCGGCGHRLRKRECKKEACRKEEKRPCNFSACP). 4 disulfide bridges follow: Cys611-Cys644, Cys623-Cys652, Cys627-Cys657, and Cys639-Cys644. Residues Asn653 and Asn714 are each glycosylated (N-linked (GlcNAc...) asparagine).

It depends on Zn(2+) as a cofactor. Expressed in the epidermis, the excretory canal cell, duct cell, pore cell, and excretory gland cell. Expressed in an oscillating pattern in epithelial cells with increased expression during the lethargus phase which occurs during molting between larval and adult stages. Not expressed in seam cells or in the RIS neuron.

Its subcellular location is the secreted. Metalloprotease. As part of the innate immune response to molting and injury to the adult epidermis, positively regulates the activity of the transcription factor sta-2 to promote the expression of epidermal antimicrobial peptides such as nlp-29. Through regulating the expression of epidermal antimicrobial peptides such as nlp-29, modulates sleep duration and locomotion quiescence during the sleep-like state called lethargus which occurs during molting between larval and adult stages. This may occur through the sleep-active RIS neuron. The chain is Zinc metalloproteinase nas-38 from Caenorhabditis elegans.